Here is a 289-residue protein sequence, read N- to C-terminus: Nucleotide-binding protein Francci3_1634 (289 aa).

13–20 (GLSGAGRS) serves as a coordination point for ATP. 64-67 (DVRG) provides a ligand contact to GTP.

The protein belongs to the RapZ-like family.

Its function is as follows. Displays ATPase and GTPase activities. This Frankia casuarinae (strain DSM 45818 / CECT 9043 / HFP020203 / CcI3) protein is Nucleotide-binding protein Francci3_1634.